The primary structure comprises 509 residues: MSPPLYSVLLEDENSVFLLDLDLSSPMGFHAYPHLPILDSSIANWSLPFSISDETFRESKKLKRTMIPISSADFSISSSSSLSVSVNSIPRLNFRDHIRTYKRYLAAEELPEDTNSSESVVGAEEDGCADGMRLVQLLIACAEAVACRDKAHASMLLSELKSNALVFGSSFQRVASCFVQGLAERLTLIQPIGSGAGVSQSMMNIMDAASEEMEEAYRLVYETCPHIQFGHFVANSTILEAFEGESFVHVVDLGMSLGLPHGHQWRGLIHSLANRASGHGRVRRLRITAIGLCIARLQAIGDELSDYANNLGINLEFSVVQKNLENLQPEDIKVNDDEALVVNSILQLHCVVKESRGALNSVLQMIHGLSPKVLVMVEQDSSHNGPFFLGRFMESLHYYSAIFDSLDAMLPKYDTKRAKMEQFYFAEEIKNIVSCEGPLRMERHERVDQWRRRMSRAGFQAAPIKMVAQAKQWLLKNKICDGYTVVEEKGCLVLGWKSKPIVAASCWKC.

The GRAS domain maps to 125–508; the sequence is EDGCADGMRL…KPIVAASCWK (384 aa). Residues 132–198 are leucine repeat I (LRI); it reads MRLVQLLIAC…IQPIGSGAGV (67 aa). The tract at residues 217–286 is VHIID; the sequence is YRLVYETCPH…SGHGRVRRLR (70 aa). Residues 248-252 carry the VHIID motif; sequence VHVVD. The leucine repeat II (LRII) stretch occupies residues 299-331; sequence AIGDELSDYANNLGINLEFSVVQKNLENLQPED. A PFYRE region spans residues 340–431; sequence LVVNSILQLH…QFYFAEEIKN (92 aa). The segment at 434–508 is SAW; it reads SCEGPLRMER…KPIVAASCWK (75 aa).

Belongs to the GRAS family. Interacts with RAM1 and NSP2. As to expression, expressed in roots under low phosphate (Pi) conditions.

It localises to the nucleus. In terms of biological role, transcription factor acting as a regulator of arbuscular mycorrhiza (AM)-related genes (e.g. PT4, STR and RAM2). Required for the morphogenesis of arbuscules upon symbiosis with AM fungi (e.g. Rhizophagus irregularis). Also involved in restricting mycorrhizal colonization of the root meristem. The chain is GRAS family protein RAD1 from Lotus japonicus (Lotus corniculatus var. japonicus).